A 2157-amino-acid chain; its full sequence is Polyketide synthase 2 (2157 aa).

Residues 7-244 are N-terminal acylcarrier protein transacylase domain (SAT); that stretch reads FIFGDQTGGF…IPIPIWAPYH (238 aa). In terms of domain architecture, Ketosynthase family 3 (KS3) spans 374–807; that stretch reads DAKIAIIGMS…GGNSALLLED (434 aa). Catalysis depends on for beta-ketoacyl synthase activity residues C546, H681, and H723. A malonyl-CoA:ACP transacylase (MAT) domain region spans residues 908-1213; it reads GFVFSGQGAQ…ASLHRKDDGW (306 aa). Residue S998 is the For acyl/malonyl transferase activity of the active site. The tract at residues 1290–1605 is product template (PT) domain; the sequence is TSSVQKIIQQ…RSLLNKVLPP (316 aa). The interval 1294–1428 is N-terminal hotdog fold; it reads QKIIQQTDGP…CLLCFADPNS (135 aa). Residues 1294–1600 enclose the PKS/mFAS DH domain; that stretch reads QKIIQQTDGP…FLGMSRSLLN (307 aa). Catalysis depends on H1327, which acts as the Proton acceptor; for dehydratase activity. A C-terminal hotdog fold region spans residues 1455 to 1600; it reads TDSLLSKGIV…FLGMSRSLLN (146 aa). D1514 functions as the Proton donor; for dehydratase activity in the catalytic mechanism. The interval 1629–1653 is disordered; it reads AKDTERRPLDIPTRAQRQPNSPPTG. In terms of domain architecture, Carrier 1 spans 1649–1726; the sequence is SPPTGTLGRI…ELKEFLGADQ (78 aa). An O-(pantetheine 4'-phosphoryl)serine modification is found at S1686. The segment at 1729-1765 is disordered; that stretch reads DDAVACESSNGQHTPQTSDKGSGTLAAQKPDDDTGSD. A compositionally biased stretch (polar residues) spans 1735–1749; sequence ESSNGQHTPQTSDKG. The region spanning 1765–1839 is the Carrier 2 domain; sequence DTTLHRVCAI…SLQKALCGTE (75 aa). S1799 is subject to O-(pantetheine 4'-phosphoryl)serine. The tract at residues 1875-2151 is thioesterase (TE) domain; the sequence is ASPPHATSIL…MAEMGDLIGE (277 aa). S1981 (for thioesterase activity) is an active-site residue.

Functionally, polyketide synthase; part of the Pks2 gene cluster that mediates the formation of infectious structures (appressoria), enabling these fungi to kill insects faster. The product of the Pks2 gene cluster is different from the one of Pks1 and has still not been identified. The protein is Polyketide synthase 2 of Metarhizium guizhouense (strain ARSEF 977).